A 103-amino-acid polypeptide reads, in one-letter code: Small ribosomal subunit protein uS10 (103 aa).

Belongs to the universal ribosomal protein uS10 family. As to quaternary structure, part of the 30S ribosomal subunit.

Involved in the binding of tRNA to the ribosomes. This is Small ribosomal subunit protein uS10 from Haemophilus ducreyi (strain 35000HP / ATCC 700724).